Reading from the N-terminus, the 102-residue chain is Small ribosomal subunit protein uS10 (102 aa).

The protein belongs to the universal ribosomal protein uS10 family. As to quaternary structure, part of the 30S ribosomal subunit.

In terms of biological role, involved in the binding of tRNA to the ribosomes. In Clostridium novyi (strain NT), this protein is Small ribosomal subunit protein uS10.